Reading from the N-terminus, the 252-residue chain is Probable ABC transporter ATP-binding protein p29 (252 aa).

One can recognise an ABC transporter domain in the interval 8–252 (LEIKNLTFKN…NILDQVFKND (245 aa)). ATP is bound at residue 42 to 49 (GSSGQGKS).

Belongs to the ABC transporter superfamily.

In terms of biological role, part of a high-affinity transport system. This is Probable ABC transporter ATP-binding protein p29 from Mesomycoplasma hyorhinis (Mycoplasma hyorhinis).